Reading from the N-terminus, the 136-residue chain is Histone H3 (136 aa).

Residues 1 to 43 (MARTKQTARKSTGAKAPRKQLASKAARKSAPATGGIKKPHRFR) are disordered. Lys5 and Lys10 each carry N6,N6,N6-trimethyllysine; alternate. Residue Lys5 is modified to N6,N6-dimethyllysine; alternate. An N6-acetyllysine; alternate mark is found at Lys5 and Lys10. Lys5 carries the N6-methyllysine; alternate modification. Ser11 is modified (phosphoserine). 3 positions are modified to N6-acetyllysine: Lys15, Lys19, and Lys24. Lys28 and Lys37 each carry N6,N6,N6-trimethyllysine; alternate. Residues Lys28 and Lys37 each carry the N6,N6-dimethyllysine; alternate modification. Lys28, Lys37, and Lys57 each carry N6-acetyllysine; alternate. Residues Lys28, Lys37, and Lys57 each carry the N6-methyllysine; alternate modification. N6-methyllysine is present on Lys80.

This sequence belongs to the histone H3 family. The nucleosome is a histone octamer containing two molecules each of H2A, H2B, H3 and H4 assembled in one H3-H4 heterotetramer and two H2A-H2B heterodimers. The octamer wraps approximately 147 bp of DNA. Phosphorylated to form H3S10ph. H3S10ph promotes subsequent H3K14ac formation by GCN5. H3S10ph is only found in the mitotically dividing MIC, but not in the amitotically dividing MAC. H3S10ph is correlated with chromosome condensation during mitotic or meiotic micronuclear divisions. In terms of processing, acetylation of histone H3 leads to transcriptional activation. H3K14ac formation by GCN5 is promoted by H3S10ph. H3K9acK14ac is the preferred acetylated form of newly synthesized H3. Acetylation occurs almost exclusively in the MAC. Post-translationally, methylated to form H3K4me. H3K4me is only found in the transcriptionally active MAC. Methylated to form H3K9me in developing MACs during conjugation, when genome-wide DNA elimination occurs. At this stage, H3K9me specifically occurs on DNA sequences being eliminated (IES), probably targeted by small scan RNAs (scnRNAs) bound to IES, and is required for efficient IES elimination. H3K9me is required for the interaction with the chromodomains of PDD1 and PDD3. The full-length protein H3S (slow migrating) is converted to H3F (fast migrating) by proteolytic removal of the first 6 residues. H3F is unique to MIC, and processing seems to occur regularly each generation at a specific point in the cell cycle.

Its subcellular location is the nucleus. It localises to the chromosome. In terms of biological role, core component of nucleosome. Nucleosomes wrap and compact DNA into chromatin, limiting DNA accessibility to the cellular machineries which require DNA as a template. Histones thereby play a central role in transcription regulation, DNA repair, DNA replication and chromosomal stability. DNA accessibility is regulated via a complex set of post-translational modifications of histones, also called histone code, and nucleosome remodeling. The chain is Histone H3 from Tetrahymena pyriformis.